The chain runs to 154 residues: Large ribosomal subunit protein uL23 (154 aa).

This sequence belongs to the universal ribosomal protein uL23 family.

In terms of biological role, this protein binds to a specific region on the 26S rRNA. The polypeptide is Large ribosomal subunit protein uL23 (RPL23A) (Daucus carota (Wild carrot)).